A 22-amino-acid chain; its full sequence is Large ribosomal subunit protein bL32 (22 aa).

The segment at 1-22 is disordered; it reads CVPKRKVSPSXRNMRXAHDXLT.

This sequence belongs to the bacterial ribosomal protein bL32 family.

This Brevundimonas vesicularis (Pseudomonas vesicularis) protein is Large ribosomal subunit protein bL32 (rpmF).